A 1430-amino-acid chain; its full sequence is FYVE, RhoGEF and PH domain-containing protein 6 (1430 aa).

The tract at residues 1 to 36 (MTSAAEIKKPPVAPKPKFVVANNKPAPPPIAPKPDI) is disordered. A compositionally biased stretch (low complexity) spans 15-24 (KPKFVVANNK). A Phosphoserine modification is found at serine 231. Positions 330-351 (CVDTPSESTEEPGNSDSSSSCL) are disordered. Polar residues predominate over residues 334–351 (PSESTEEPGNSDSSSSCL). Serine 515 bears the Phosphoserine mark. Residues 516–538 (EELLEKSSYPSSEEKSSEKSLER) are disordered. Basic and acidic residues predominate over residues 527 to 538 (SEEKSSEKSLER). Serine 554, serine 605, serine 692, and serine 721 each carry phosphoserine. Disordered regions lie at residues 695–739 (NYSL…PYKS) and 800–869 (PDGQ…NGMK). The segment covering 728 to 739 (SRESSSQAPYKS) has biased composition (polar residues). A compositionally biased stretch (acidic residues) spans 831–847 (PSDEEEIINSSDEDDVS). Basic and acidic residues predominate over residues 851–868 (SKGEPDPLEDKQDEDNGM). The 190-residue stretch at 871–1060 (KVHHIAKEIM…IEVANHANDT (190 aa)) folds into the DH domain. The region spanning 1089 to 1183 (VFLKEGILMK…WLEAISRAIE (95 aa)) is the PH 1 domain. Serine 1197 carries the phosphoserine modification. Residues 1222-1281 (DTRATMCMICTSEFTLTWRRHHCRACGKIVCQACSSNKYGLDYLKNQPARVCEHCFQELQ) form an FYVE-type zinc finger. The Zn(2+) site is built by cysteine 1228, cysteine 1231, cysteine 1244, cysteine 1247, cysteine 1252, cysteine 1255, cysteine 1273, and cysteine 1276. Residues 1333-1429 (DSSMSGYLYR…WIEAFQEGTI (97 aa)) enclose the PH 2 domain.

Its subcellular location is the cytoplasm. It localises to the cytoskeleton. In terms of biological role, may activate CDC42, a member of the Ras-like family of Rho- and Rac proteins, by exchanging bound GDP for free GTP. May play a role in regulating the actin cytoskeleton and cell shape. The chain is FYVE, RhoGEF and PH domain-containing protein 6 (FGD6) from Homo sapiens (Human).